The sequence spans 322 residues: Ribosomal RNA small subunit methyltransferase H (322 aa).

Residues 35–37 (GGY), D52, F79, D100, and Q107 contribute to the S-adenosyl-L-methionine site. The tract at residues 254-322 (GATPAGSRHL…TAPKKEGRQG (69 aa)) is disordered. The span at 295–309 (SRSATLRVARRTAAA) shows a compositional bias: low complexity.

It belongs to the methyltransferase superfamily. RsmH family.

It is found in the cytoplasm. It carries out the reaction cytidine(1402) in 16S rRNA + S-adenosyl-L-methionine = N(4)-methylcytidine(1402) in 16S rRNA + S-adenosyl-L-homocysteine + H(+). Specifically methylates the N4 position of cytidine in position 1402 (C1402) of 16S rRNA. The chain is Ribosomal RNA small subunit methyltransferase H from Rhizorhabdus wittichii (strain DSM 6014 / CCUG 31198 / JCM 15750 / NBRC 105917 / EY 4224 / RW1) (Sphingomonas wittichii).